A 189-amino-acid chain; its full sequence is Elongation factor P (189 aa).

Belongs to the elongation factor P family.

It is found in the cytoplasm. It functions in the pathway protein biosynthesis; polypeptide chain elongation. Involved in peptide bond synthesis. Stimulates efficient translation and peptide-bond synthesis on native or reconstituted 70S ribosomes in vitro. Probably functions indirectly by altering the affinity of the ribosome for aminoacyl-tRNA, thus increasing their reactivity as acceptors for peptidyl transferase. The protein is Elongation factor P of Rhizobium meliloti (strain 1021) (Ensifer meliloti).